Consider the following 593-residue polypeptide: Aspartate--tRNA ligase (593 aa).

L-aspartate is bound at residue glutamate 180. An aspartate region spans residues 204 to 207 (QLFK). Arginine 226 provides a ligand contact to L-aspartate. ATP is bound by residues 226-228 (RDE) and glutamine 235. Histidine 454 is a binding site for L-aspartate. ATP is bound at residue glutamate 488. Arginine 495 contacts L-aspartate. An ATP-binding site is contributed by 540 to 543 (GFDR).

The protein belongs to the class-II aminoacyl-tRNA synthetase family. Type 1 subfamily. As to quaternary structure, homodimer.

It is found in the cytoplasm. It catalyses the reaction tRNA(Asp) + L-aspartate + ATP = L-aspartyl-tRNA(Asp) + AMP + diphosphate. Its function is as follows. Catalyzes the attachment of L-aspartate to tRNA(Asp) in a two-step reaction: L-aspartate is first activated by ATP to form Asp-AMP and then transferred to the acceptor end of tRNA(Asp). The chain is Aspartate--tRNA ligase from Clostridium novyi (strain NT).